Here is a 119-residue protein sequence, read N- to C-terminus: Cytochrome c55X (119 aa).

The first 20 residues, 1–20 (MNAPPDFRRAASHALWLALA), serve as a signal peptide directing secretion. Positions 51, 54, and 55 each coordinate heme c.

Post-translationally, binds 1 heme c group covalently per subunit.

Its subcellular location is the periplasm. Functionally, monoheme c-type cytochrome. This Pseudomonas aeruginosa (strain ATCC 15692 / DSM 22644 / CIP 104116 / JCM 14847 / LMG 12228 / 1C / PRS 101 / PAO1) protein is Cytochrome c55X (nirC).